The chain runs to 341 residues: L-threonine 3-dehydrogenase (341 aa).

Residue cysteine 38 coordinates Zn(2+). Active-site charge relay system residues include threonine 40 and histidine 43. Positions 63, 64, 93, 96, 99, and 107 each coordinate Zn(2+). Residues isoleucine 175, aspartate 195, arginine 200, 262 to 264, and 286 to 287 contribute to the NAD(+) site; these read LGI and IY.

It belongs to the zinc-containing alcohol dehydrogenase family. In terms of assembly, homotetramer. Zn(2+) is required as a cofactor.

It localises to the cytoplasm. The enzyme catalyses L-threonine + NAD(+) = (2S)-2-amino-3-oxobutanoate + NADH + H(+). It functions in the pathway amino-acid degradation; L-threonine degradation via oxydo-reductase pathway; glycine from L-threonine: step 1/2. In terms of biological role, catalyzes the NAD(+)-dependent oxidation of L-threonine to 2-amino-3-ketobutyrate. This chain is L-threonine 3-dehydrogenase, found in Edwardsiella ictaluri (strain 93-146).